A 219-amino-acid polypeptide reads, in one-letter code: Ras-related protein Rab-3B (219 aa).

The residue at position 2 (Ala-2) is an N-acetylalanine. GTP contacts are provided by Ser-31, Ser-32, Val-33, Gly-34, Lys-35, Thr-36, Ser-37, Pro-49, and Ser-53. A Mg(2+)-binding site is contributed by Thr-36. The Switch 1 signature appears at 45-58; sequence DTFTPAFVSTVGID. Thr-54 and Asp-77 together coordinate Mg(2+). A Switch 2 motif is present at residues 78 to 96; sequence TAGQERYRTITTAYYRGAM. Residue Gly-80 participates in GTP binding. Thr-86 is modified (phosphothreonine). Asn-135, Lys-136, Asp-138, Ala-166, and Lys-167 together coordinate GTP. Ser-188 and Ser-190 each carry phosphoserine. Residues Cys-217 and Cys-219 are each lipidated (S-geranylgeranyl cysteine). Cys-219 carries the cysteine methyl ester modification.

This sequence belongs to the small GTPase superfamily. Rab family. As to quaternary structure, interacts with RPH3A and RPH3AL. Interacts with RIMS1. Interacts with RIMS2. The GTP-bound form interacts with GAS8/DRC4 (via coiled-coil domains). Interacts with GDI2, and CHM; phosphorylation at Thr-86 disrupts these interactions. Interacts with MADD (via uDENN domain); the GTP-bound form is preferred for interaction. Mg(2+) serves as cofactor. In terms of processing, phosphorylation of Thr-86 in the switch II region by LRRK2 prevents the association of RAB regulatory proteins, including CHM and RAB GDP dissociation inhibitor GDI2.

Its subcellular location is the cell membrane. The protein resides in the golgi apparatus. It carries out the reaction GTP + H2O = GDP + phosphate + H(+). With respect to regulation, regulated by guanine nucleotide exchange factors (GEFs) which promote the exchange of bound GDP for free GTP. Regulated by GTPase activating proteins (GAPs) which increase the GTP hydrolysis activity. Inhibited by GDP dissociation inhibitors (GDIs) which prevent Rab-GDP dissociation. In terms of biological role, the small GTPases Rab are key regulators of intracellular membrane trafficking, from the formation of transport vesicles to their fusion with membranes. Rabs cycle between an inactive GDP-bound form and an active GTP-bound form that is able to recruit to membranes different sets of downstream effectors directly responsible for vesicle formation, movement, tethering and fusion. The sequence is that of Ras-related protein Rab-3B from Rattus norvegicus (Rat).